The sequence spans 120 residues: Large ribosomal subunit protein bL19 (120 aa).

The protein belongs to the bacterial ribosomal protein bL19 family.

This protein is located at the 30S-50S ribosomal subunit interface and may play a role in the structure and function of the aminoacyl-tRNA binding site. This is Large ribosomal subunit protein bL19 from Trichormus variabilis (strain ATCC 29413 / PCC 7937) (Anabaena variabilis).